The chain runs to 256 residues: Small ribosomal subunit protein eS1 (256 aa).

Ala-2 is modified (N-acetylalanine; partial).

Belongs to the eukaryotic ribosomal protein eS1 family. In terms of assembly, component of the small ribosomal subunit. Mature ribosomes consist of a small (40S) and a large (60S) subunit. The 40S subunit contains about 33 different proteins and 1 molecule of RNA (18S). The 60S subunit contains about 49 different proteins and 3 molecules of RNA (25S, 5.8S and 5S).

Its subcellular location is the cytoplasm. In Fusarium vanettenii (strain ATCC MYA-4622 / CBS 123669 / FGSC 9596 / NRRL 45880 / 77-13-4) (Fusarium solani subsp. pisi), this protein is Small ribosomal subunit protein eS1.